A 707-amino-acid polypeptide reads, in one-letter code: Golgin candidate 1 (707 aa).

At 1–664 the chain is on the cytoplasmic side; that stretch reads MASWLKAAED…RATRFLWRYP (664 aa). 3 disordered regions span residues 22–106, 121–196, and 234–256; these read VVED…EIHP, VADT…SKRD, and QEPK…ADTT. Residues 38-47 show a composition bias toward low complexity; that stretch reads SGRKGSQGKR. Positions 56–67 are enriched in basic and acidic residues; sequence VKEESSNKRDSS. Positions 68–80 are enriched in polar residues; sequence GDQSGPGVSQSEV. Residues 83-95 show a composition bias toward low complexity; sequence SKSSVSTDETSSS. 3 stretches are compositionally biased toward basic and acidic residues: residues 139–150, 185–196, and 245–254; these read DGDRSESKHADG, TQRELDDSSKRD, and LKREQDRRAD. Coiled coils occupy residues 287-424 and 452-608; these read RVCA…NATK and ADER…KSRV. The helical; Signal-anchor for type II membrane protein transmembrane segment at 665–685 threads the bilayer; the sequence is IARMFLLFYLVFVHLFLMYLI. The Lumenal segment spans residues 686–707; sequence HRLQEQAEAQEVAAMTNNVFRL.

It localises to the golgi apparatus membrane. In terms of biological role, golgi matrix protein playing a role in tethering of vesicles to Golgi membranes and in maintaining the overall structure of the Golgi apparatus. The protein is Golgin candidate 1 (GC1) of Arabidopsis thaliana (Mouse-ear cress).